The sequence spans 694 residues: PTS system fructose-specific EIIABC component (694 aa).

The region spanning 4–149 (PLLSAELFFN…NGLINLIDSF (146 aa)) is the PTS EIIA type-2 domain. His68 (tele-phosphohistidine intermediate; for EIIA activity) is an active-site residue. Phosphohistidine; by HPr is present on His68. Positions 179–275 (FVAVTACPTG…PQTVYDQVVK (97 aa)) constitute a PTS EIIB type-2 domain. Cys185 (phosphocysteine intermediate; for EIIB activity) is an active-site residue. Phosphocysteine; by EIIA is present on Cys185. One can recognise a PTS EIIC type-2 domain in the interval 310-687 (IYRAILSGVS…NLLVVRKKTK (378 aa)). 10 consecutive transmembrane segments (helical) span residues 318–338 (VSYMLPFVVFGGILIAIAFLI), 364–384 (GGLSFGLIVPILSAYIAFALV), 390–410 (LPGFIVGLISAGKFLLNIDIV), 422–442 (VSSGFFGAIFGGLLAAVLIIV), 461–481 (ILFIPLLGTLVTAALFWVINI), 502–522 (LAPLLGLVIGLMMCFDLGGPV), 542–562 (VAMASAILSGMVPPLGIAIAA), 576–596 (AAYACYVMGLSFISEGAIPFV), 602–622 (IMLAANLIGGAVCGVLTGAFA), and 655–675 (GVGLALLALIVSSFISAGIII).

It is found in the cell membrane. It carries out the reaction D-fructose(out) + N(pros)-phospho-L-histidyl-[protein] = D-fructose 1-phosphate(in) + L-histidyl-[protein]. Functionally, the phosphoenolpyruvate-dependent sugar phosphotransferase system (sugar PTS), a major carbohydrate active transport system, catalyzes the phosphorylation of incoming sugar substrates concomitantly with their translocation across the cell membrane. This system is involved in fructose transport. This Mycoplasma pneumoniae (strain ATCC 29342 / M129 / Subtype 1) (Mycoplasmoides pneumoniae) protein is PTS system fructose-specific EIIABC component.